The primary structure comprises 119 residues: Large ribosomal subunit protein bL20 (119 aa).

The protein belongs to the bacterial ribosomal protein bL20 family.

In terms of biological role, binds directly to 23S ribosomal RNA and is necessary for the in vitro assembly process of the 50S ribosomal subunit. It is not involved in the protein synthesizing functions of that subunit. This chain is Large ribosomal subunit protein bL20, found in Xylella fastidiosa (strain M23).